A 139-amino-acid polypeptide reads, in one-letter code: Small ribosomal subunit protein uS12 (139 aa).

3-methylthioaspartic acid is present on aspartate 102. The disordered stretch occupies residues 116-139 (DTTGVAKRSQGRSKYGAKRPKKSK). Residues 124–139 (SQGRSKYGAKRPKKSK) are compositionally biased toward basic residues.

The protein belongs to the universal ribosomal protein uS12 family. Part of the 30S ribosomal subunit. Contacts proteins S8 and S17. May interact with IF1 in the 30S initiation complex.

Its function is as follows. With S4 and S5 plays an important role in translational accuracy. Functionally, interacts with and stabilizes bases of the 16S rRNA that are involved in tRNA selection in the A site and with the mRNA backbone. Located at the interface of the 30S and 50S subunits, it traverses the body of the 30S subunit contacting proteins on the other side and probably holding the rRNA structure together. The combined cluster of proteins S8, S12 and S17 appears to hold together the shoulder and platform of the 30S subunit. The sequence is that of Small ribosomal subunit protein uS12 from Mesomycoplasma hyopneumoniae (strain 7448) (Mycoplasma hyopneumoniae).